We begin with the raw amino-acid sequence, 662 residues long: Methyl-accepting chemotaxis protein TlpA (662 aa).

The Cytoplasmic portion of the chain corresponds to 1 to 16; it reads MKKTLTTIRRSSIARR. A helical transmembrane segment spans residues 17 to 37; the sequence is LIISFLLILIVPITALSVSAY. Over 38–281 the chain is Extracellular; the sequence is QSAVASLDVQ…IHDAASRVLI (244 aa). Residues 152–228 enclose the Cache domain; sequence VTEPYESISS…KAGTELKGDW (77 aa). A helical membrane pass occupies residues 282-302; that stretch reads MASIVLAIAIGAGMTAIYFVI. The HAMP domain maps to 303–355; sequence RSITKPLRRIVASAEKISEGDLTETIEINSKDELGVLSESFNHMAHSLRSLIH. Residues 303–662 are Cytoplasmic-facing; it reads RSITKPLRRI…DLTKQFKVDK (360 aa). A glutamate methyl ester (Glu) mark is found at E370, E594, E629, and E636. The region spanning 374-610 is the Methyl-accepting transducer domain; sequence SADQTSRATE…EISAASNDIT (237 aa).

It belongs to the methyl-accepting chemotaxis (MCP) protein family. In terms of assembly, interacts with YabA.

Its subcellular location is the cell membrane. Chemotactic-signal transducers respond to changes in the concentration of attractants and repellents in the environment, transduce a signal from the outside to the inside of the cell, and facilitate sensory adaptation through the variation of the level of methylation. All amino acids serve as attractants in B.subtilis, they appear to cause an increase in the turnover methyl groups, leading to methylation of an unidentified acceptor, while repellents have been shown to cause a decrease in methyl group turnover. The methyl groups are added by a methyltransferase and removed by a methylesterase. In Bacillus subtilis (strain 168), this protein is Methyl-accepting chemotaxis protein TlpA.